Consider the following 423-residue polypeptide: MKLCSLAVLVPIVLFCEQHVFAFQSGQVLAALPRTSRQVQVLQNLTTTYEIVLWQPVTADLIVKKKQVHFFVNASDVDNVKAHLNVSGIPCSVLLADVEDLIQQQISNDTVSPRASASYYEQYHSLNEIYSWIEFITERHPDMLTKIHIGSSFEKYPLYVLKVSGKEQAAKNAIWIDCGIHAREWISPAFCLWFIGHITQFYGIIGQYTNLLRLVDFYVMPVVNVDGYDYSWKKNRMWRKNRSFYANNHCIGTDLNRNFASKHWCEEGASSSSCSETYCGLYPESEPEVKAVASFLRRNINQIKAYISMHSYSQHIVFPYSYTRSKSKDHEELSLVASEAVRAIEKISKNTRYTHGHGSETLYLAPGGGDDWIYDLGIKYSFTIELRDTGTYGFLLPERYIKPTCREAFAAVSKIAWHVIRNV.

A signal peptide spans 1 to 22 (MKLCSLAVLVPIVLFCEQHVFA). A propeptide spans 23 to 114 (FQSGQVLAAL…QISNDTVSPR (92 aa)) (activation peptide). N44, N73, and N85 each carry an N-linked (GlcNAc...) asparagine glycan. A glycan (N-linked (GlcNAc...) (complex) asparagine) is linked at N108. One can recognise a Peptidase M14 domain in the interval 122–419 (QYHSLNEIYS…AAVSKIAWHV (298 aa)). A disulfide bridge connects residues C178 and C191. Zn(2+)-binding residues include H181 and E184. Residues 181 to 184 (HARE) and R239 each bind substrate. N241 is a glycosylation site (N-linked (GlcNAc...) asparagine; partial). 2 cysteine pairs are disulfide-bonded: C250-C274 and C265-C279. Residue 256-257 (NR) participates in substrate binding. H310 lines the Zn(2+) pocket. Substrate is bound by residues 311–312 (SY) and Y363. E385 (proton donor/acceptor) is an active-site residue.

It belongs to the peptidase M14 family. Requires Zn(2+) as cofactor. Post-translationally, N-glycosylated. N-glycan at Asn-108: Hex5HexNAc4. In terms of tissue distribution, plasma; synthesized in the liver.

The protein resides in the secreted. It catalyses the reaction Release of C-terminal Arg and Lys from a polypeptide.. Its activity is regulated as follows. TAFI/CPB2 is unique among carboxypeptidases in that it spontaneously inactivates with a short half-life, a property that is crucial for its role in controlling blood clot lysis. The zymogen is stabilized by interactions with the activation peptide. Release of the activation peptide increases a dynamic flap mobility and in time this leads to conformational changes that disrupt the catalytic site and expose a cryptic thrombin-cleavage site present at Arg-324. Cleaves C-terminal arginine or lysine residues from biologically active peptides such as kinins or anaphylatoxins in the circulation thereby regulating their activities. Down-regulates fibrinolysis by removing C-terminal lysine residues from fibrin that has already been partially degraded by plasmin. This chain is Carboxypeptidase B2 (CPB2), found in Homo sapiens (Human).